A 171-amino-acid chain; its full sequence is Shikimate kinase (171 aa).

Residue 14-19 (GAGKST) coordinates ATP. Serine 18 is a Mg(2+) binding site. Positions 36, 60, and 82 each coordinate substrate. Arginine 120 serves as a coordination point for ATP. Residue arginine 139 participates in substrate binding. Residue glutamine 156 participates in ATP binding.

It belongs to the shikimate kinase family. As to quaternary structure, monomer. The cofactor is Mg(2+).

The protein localises to the cytoplasm. The catalysed reaction is shikimate + ATP = 3-phosphoshikimate + ADP + H(+). The protein operates within metabolic intermediate biosynthesis; chorismate biosynthesis; chorismate from D-erythrose 4-phosphate and phosphoenolpyruvate: step 5/7. Its function is as follows. Catalyzes the specific phosphorylation of the 3-hydroxyl group of shikimic acid using ATP as a cosubstrate. In Psychromonas ingrahamii (strain DSM 17664 / CCUG 51855 / 37), this protein is Shikimate kinase.